The following is a 154-amino-acid chain: Transcriptional repressor NrdR (154 aa).

A zinc finger lies at 3–34; it reads CPFCNHGELKVIDSRNAPESNAIKRRRECLRC. Residues 48 to 138 form the ATP-cone domain; the sequence is VQVLKRDGRY…VYRRFKDVGE (91 aa).

It belongs to the NrdR family. Zn(2+) serves as cofactor.

Its function is as follows. Negatively regulates transcription of bacterial ribonucleotide reductase nrd genes and operons by binding to NrdR-boxes. The protein is Transcriptional repressor NrdR of Chlamydia trachomatis serovar L2 (strain ATCC VR-902B / DSM 19102 / 434/Bu).